Here is a 354-residue protein sequence, read N- to C-terminus: N-acylethanolamine-hydrolyzing acid amidase (354 aa).

The first 22 residues, 1–22 (MRSPGIVLLLLLLLLLPPGAAP), serve as a signal peptide directing secretion. Residues Asn-35 and Asn-104 are each glycosylated (N-linked (GlcNAc...) asparagine). Cys-123 functions as the Nucleophile in the catalytic mechanism. 3 N-linked (GlcNAc...) asparagine glycosylation sites follow: Asn-306, Asn-312, and Asn-352.

It belongs to the acid ceramidase family. In terms of assembly, heterodimer of an alpha and a beta subunit, produced by autocatalytic cleavage. N-glycosylated. Tunicamycin treatment causes a reduction in specific activity against N-palmitoylethanolamine. In terms of processing, autoproteolytic cleavage at pH 4.5 gives rise to the alpha and beta subunit. Cleavage gives rise to a conformation change that activates the enzyme. The same catalytic Cys residue mediates the autoproteolytic cleavage and subsequent hydrolysis of lipid substrates.

Its subcellular location is the lysosome. The protein localises to the membrane. It catalyses the reaction N-hexadecanoylethanolamine + H2O = ethanolamine + hexadecanoate. It carries out the reaction an N-(long-chain fatty acyl)ethanolamine + H2O = a long-chain fatty acid + ethanolamine. The enzyme catalyses N-dodecanoylethanolamine + H2O = dodecanoate + ethanolamine. The catalysed reaction is N-tetradecanoylethanolamine + H2O = tetradecanoate + ethanolamine. It catalyses the reaction an N-acylsphing-4-enine + H2O = sphing-4-enine + a fatty acid. It carries out the reaction N-hexadecanoylsphing-4-enine + H2O = sphing-4-enine + hexadecanoate. The enzyme catalyses N-dodecanoylsphing-4-enine + H2O = dodecanoate + sphing-4-enine. Its pathway is lipid metabolism; fatty acid metabolism. Degrades bioactive fatty acid amides to their corresponding acids, with the following preference: N-palmitoylethanolamine &gt; N-myristoylethanolamine &gt; N-stearoylethanolamine &gt; N-oleoylethanolamine &gt; N-linoleoylethanolamine &gt; N-arachidonoylethanolamine. This is N-acylethanolamine-hydrolyzing acid amidase from Cavia porcellus (Guinea pig).